The following is a 129-amino-acid chain: Small ribosomal subunit protein uS11 (129 aa).

This sequence belongs to the universal ribosomal protein uS11 family. In terms of assembly, part of the 30S ribosomal subunit. Interacts with proteins S7 and S18. Binds to IF-3.

In terms of biological role, located on the platform of the 30S subunit, it bridges several disparate RNA helices of the 16S rRNA. Forms part of the Shine-Dalgarno cleft in the 70S ribosome. The protein is Small ribosomal subunit protein uS11 of Bartonella tribocorum (strain CIP 105476 / IBS 506).